The primary structure comprises 253 residues: 5'-nucleotidase SurE (253 aa).

The a divalent metal cation site is built by Asp-8, Asp-9, Ser-39, and Asn-92.

It belongs to the SurE nucleotidase family. The cofactor is a divalent metal cation.

The protein localises to the cytoplasm. The catalysed reaction is a ribonucleoside 5'-phosphate + H2O = a ribonucleoside + phosphate. Nucleotidase that shows phosphatase activity on nucleoside 5'-monophosphates. The sequence is that of 5'-nucleotidase SurE from Burkholderia pseudomallei (strain 1710b).